A 170-amino-acid chain; its full sequence is Probable T4-type lysozyme 2 (170 aa).

Catalysis depends on E13, which acts as the Proton donor. D22 (nucleophile) is an active-site residue.

Belongs to the glycosyl hydrolase 24 family.

The enzyme catalyses Hydrolysis of (1-&gt;4)-beta-linkages between N-acetylmuramic acid and N-acetyl-D-glucosamine residues in a peptidoglycan and between N-acetyl-D-glucosamine residues in chitodextrins.. The chain is Probable T4-type lysozyme 2 from Dictyostelium discoideum (Social amoeba).